Reading from the N-terminus, the 84-residue chain is Large ribosomal subunit protein bL27 (84 aa).

Residues 1-20 (MAHKKAGGSTRNGRDSHSKR) are disordered.

The protein belongs to the bacterial ribosomal protein bL27 family.

The protein is Large ribosomal subunit protein bL27 of Blochmanniella pennsylvanica (strain BPEN).